Consider the following 272-residue polypeptide: Orotidine 5'-phosphate decarboxylase (272 aa).

Lys-95 acts as the Proton donor in catalysis.

It belongs to the OMP decarboxylase family. Type 2 subfamily.

It catalyses the reaction orotidine 5'-phosphate + H(+) = UMP + CO2. Its pathway is pyrimidine metabolism; UMP biosynthesis via de novo pathway; UMP from orotate: step 2/2. The chain is Orotidine 5'-phosphate decarboxylase from Bordetella petrii (strain ATCC BAA-461 / DSM 12804 / CCUG 43448).